We begin with the raw amino-acid sequence, 298 residues long: ADP-ribosylation factor GTPase-activating protein effector protein 2 (298 aa).

Residue S2 is modified to N-acetylserine. Residues 8 to 130 (KKALSALLRD…KWIGDLSSIE (123 aa)) enclose the Arf-GAP domain. The C4-type zinc finger occupies 23-47 (CADCKAQLHPRWASWSLGVFICIKC). A disordered region spans residues 137-180 (EPVLHKPSANHSLPASNARLDQSSNSLQKTQTQPPSHLLSTSRS). Residues 145-171 (ANHSLPASNARLDQSSNSLQKTQTQPP) are compositionally biased toward polar residues. Phosphoserine is present on residues S180, S183, and S207.

The protein resides in the cytoplasm. It is found in the golgi apparatus. In terms of biological role, GTPase-activating protein for the ADP ribosylation factor family. This Saccharomyces cerevisiae (strain ATCC 204508 / S288c) (Baker's yeast) protein is ADP-ribosylation factor GTPase-activating protein effector protein 2 (AGE2).